The chain runs to 1379 residues: Attractin-like protein 1 (1379 aa).

The interval 1 to 23 is disordered; it reads METGGRARTGTPQPAAPGVWRAR. The signal sequence occupies residues 1 to 52; that stretch reads METGGRARTGTPQPAAPGVWRARPAGGGGGGASSWLLDGNSWLLCYGFLYLA. Residues 53–91 enclose the EGF-like 1 domain; sequence LYAQVSQSKPCERTGSCFSGRCVNSTCLCDPGWVGDQCQ. The Extracellular portion of the chain corresponds to 53 to 1230; sequence LYAQVSQSKP…FSQHNTIMDL (1178 aa). 3 cysteine pairs are disulfide-bonded: Cys63-Cys79, Cys81-Cys90, and Cys93-Cys119. An N-linked (GlcNAc...) asparagine glycan is attached at Asn76. Residues 93–209 enclose the CUB domain; sequence CQGRFKLTEP…TGFNIFYSIN (117 aa). N-linked (GlcNAc...) asparagine glycosylation is found at Asn174 and Asn198. The region spanning 207–245 is the EGF-like 2 domain; that stretch reads SINSCPNNCSGHGKCTTSVSVPSQVYCECDKYWKGEACD. 3 cysteine pairs are disulfide-bonded: Cys211–Cys221, Cys215–Cys233, and Cys235–Cys244. Kelch repeat units lie at residues 316-365, 367-415, 427-475, 480-531, 533-591, and 592-638; these read FMWV…LYQE, IFMY…EGHS, VMII…SVYD, SIYV…LING, MLIF…VING, and SMYI…WNKN. A glycan (N-linked (GlcNAc...) asparagine) is linked at Asn380. PSI domains lie at 614–657, 666–709, and 715–760; these read NCKA…AKCP, RCYR…TKCH, and ICNK…DACL. The 119-residue stretch at 755–873 folds into the C-type lectin domain; sequence IGDACLRVNS…TSMANGLVCE (119 aa). 3 N-linked (GlcNAc...) asparagine glycosylation sites follow: Asn763, Asn778, and Asn898. A disulfide bridge connects residues Cys776 and Cys872. 2 consecutive PSI domains span residues 889–939 and 942–1012; these read PCSL…ATCS and NCSG…IQCP. Intrachain disulfides connect Cys1014–Cys1022, Cys1016–Cys1028, Cys1031–Cys1040, Cys1043–Cys1057, Cys1060–Cys1069, Cys1062–Cys1076, Cys1078–Cys1088, and Cys1091–Cys1106. 2 Laminin EGF-like domains span residues 1014-1059 and 1060-1108; these read CQCN…QCTA and CTCS…TCYY. A glycan (N-linked (GlcNAc...) asparagine) is linked at Asn1157. The helical transmembrane segment at 1231-1251 threads the bilayer; the sequence is VQFFVTFFSCFLSLLLVAAVV. The Cytoplasmic portion of the chain corresponds to 1252-1379; the sequence is WKIKQTCWAS…HLSTRQGTCV (128 aa). The interval 1354–1379 is disordered; sequence KASDSKDKTSGVRNRKHLSTRQGTCV.

As to quaternary structure, interacts with MC4R.

The protein localises to the membrane. In terms of biological role, may play a role in melanocortin signaling pathways that regulate energy homeostasis. This Homo sapiens (Human) protein is Attractin-like protein 1 (ATRNL1).